A 1056-amino-acid chain; its full sequence is Carbamoyl phosphate synthase large chain (1056 aa).

The carboxyphosphate synthetic domain stretch occupies residues 1-401 (MPKRTDIHKI…ALHKAVRSLE (401 aa)). Residues Arg129, Arg169, Gly175, Gly176, Lys208, Ile210, Glu215, Gly241, Ile242, His243, Gln284, and Glu298 each coordinate ATP. Residues 133-327 (KELMNELGEP…IAKMAAKIAV (195 aa)) enclose the ATP-grasp 1 domain. Gln284, Glu298, and Asn300 together coordinate Mg(2+). Positions 284, 298, and 300 each coordinate Mn(2+). Residues 402–546 (IDEKDLFSAE…YSAYDHENES (145 aa)) form an oligomerization domain region. The segment at 547-929 (QRTKKPSILV…ALHKAFSGAH (383 aa)) is carbamoyl phosphate synthetic domain. Positions 671–861 (DQVITDLNLK…MAQVATRVIL (191 aa)) constitute an ATP-grasp 2 domain. ATP contacts are provided by Arg707, Ala746, Leu748, Glu752, Gly777, Val778, His779, Ser780, Gln820, and Glu832. Mg(2+)-binding residues include Gln820, Glu832, and Asn834. Residues Gln820, Glu832, and Asn834 each coordinate Mn(2+). In terms of domain architecture, MGS-like spans 930–1056 (IQVPNDGKIL…DQSLEAITIK (127 aa)). An allosteric domain region spans residues 930-1056 (IQVPNDGKIL…DQSLEAITIK (127 aa)).

The protein belongs to the CarB family. As to quaternary structure, composed of two chains; the small (or glutamine) chain promotes the hydrolysis of glutamine to ammonia, which is used by the large (or ammonia) chain to synthesize carbamoyl phosphate. Tetramer of heterodimers (alpha,beta)4. Mg(2+) serves as cofactor. It depends on Mn(2+) as a cofactor.

The catalysed reaction is hydrogencarbonate + L-glutamine + 2 ATP + H2O = carbamoyl phosphate + L-glutamate + 2 ADP + phosphate + 2 H(+). It carries out the reaction hydrogencarbonate + NH4(+) + 2 ATP = carbamoyl phosphate + 2 ADP + phosphate + 2 H(+). It functions in the pathway amino-acid biosynthesis; L-arginine biosynthesis; carbamoyl phosphate from bicarbonate: step 1/1. Its pathway is pyrimidine metabolism; UMP biosynthesis via de novo pathway; (S)-dihydroorotate from bicarbonate: step 1/3. Large subunit of the glutamine-dependent carbamoyl phosphate synthetase (CPSase). CPSase catalyzes the formation of carbamoyl phosphate from the ammonia moiety of glutamine, carbonate, and phosphate donated by ATP, constituting the first step of 2 biosynthetic pathways, one leading to arginine and/or urea and the other to pyrimidine nucleotides. The large subunit (synthetase) binds the substrates ammonia (free or transferred from glutamine from the small subunit), hydrogencarbonate and ATP and carries out an ATP-coupled ligase reaction, activating hydrogencarbonate by forming carboxy phosphate which reacts with ammonia to form carbamoyl phosphate. This is Carbamoyl phosphate synthase large chain from Limosilactobacillus reuteri (strain DSM 20016) (Lactobacillus reuteri).